Reading from the N-terminus, the 523-residue chain is GMP synthase [glutamine-hydrolyzing] (523 aa).

The region spanning 8 to 205 (KILILDFGSQ…VVNICGCETK (198 aa)) is the Glutamine amidotransferase type-1 domain. The active-site Nucleophile is the C85. Active-site residues include H179 and E181. A GMPS ATP-PPase domain is found at 206–398 (WTAENIIEDA…LGLPAEMINR (193 aa)). 233–239 (SGGVDSS) contacts ATP.

As to quaternary structure, homodimer.

It carries out the reaction XMP + L-glutamine + ATP + H2O = GMP + L-glutamate + AMP + diphosphate + 2 H(+). It participates in purine metabolism; GMP biosynthesis; GMP from XMP (L-Gln route): step 1/1. Catalyzes the synthesis of GMP from XMP. This is GMP synthase [glutamine-hydrolyzing] from Haemophilus influenzae (strain PittEE).